Reading from the N-terminus, the 327-residue chain is Ribosomal RNA small subunit methyltransferase H (327 aa).

Residues 36–38 (GGH), D55, L89, D103, and Q110 each bind S-adenosyl-L-methionine. The interval 286–327 (GAEPASDTEIEQNARAGSVRLRAAERTAAEPGRAHNPTGGVR) is disordered.

This sequence belongs to the methyltransferase superfamily. RsmH family.

It localises to the cytoplasm. It carries out the reaction cytidine(1402) in 16S rRNA + S-adenosyl-L-methionine = N(4)-methylcytidine(1402) in 16S rRNA + S-adenosyl-L-homocysteine + H(+). Its function is as follows. Specifically methylates the N4 position of cytidine in position 1402 (C1402) of 16S rRNA. The chain is Ribosomal RNA small subunit methyltransferase H from Parafrankia sp. (strain EAN1pec).